Consider the following 546-residue polypeptide: Phosphomethylpyrimidine synthase (546 aa).

Residues N145, M174, Y203, H239, 259 to 261 (SRG), 300 to 303 (DGLR), and E339 each bind substrate. Position 343 (H343) interacts with Zn(2+). Residue Y366 participates in substrate binding. H407 serves as a coordination point for Zn(2+). 3 residues coordinate [4Fe-4S] cluster: C487, C490, and C495.

This sequence belongs to the ThiC family. [4Fe-4S] cluster serves as cofactor.

It catalyses the reaction 5-amino-1-(5-phospho-beta-D-ribosyl)imidazole + S-adenosyl-L-methionine = 4-amino-2-methyl-5-(phosphooxymethyl)pyrimidine + CO + 5'-deoxyadenosine + formate + L-methionine + 3 H(+). Its pathway is cofactor biosynthesis; thiamine diphosphate biosynthesis. In terms of biological role, catalyzes the synthesis of the hydroxymethylpyrimidine phosphate (HMP-P) moiety of thiamine from aminoimidazole ribotide (AIR) in a radical S-adenosyl-L-methionine (SAM)-dependent reaction. This is Phosphomethylpyrimidine synthase from Mycobacterium ulcerans (strain Agy99).